Reading from the N-terminus, the 354-residue chain is C-C chemokine receptor type 5 (354 aa).

The Extracellular portion of the chain corresponds to 1–32 (MDFQGSIPTYIYDIDYSMSAPCQKVNVKQIAA). S6 carries O-linked (GalNAc...) serine glycosylation. A sulfotyrosine mark is found at Y10 and Y16. Cystine bridges form between C22–C271 and C103–C180. Residues 33–60 (QLLPPLYSLVFIFGFVGNMMVFLILISC) traverse the membrane as a helical segment. The Cytoplasmic segment spans residues 61–70 (KKLKSMTDIY). The chain crosses the membrane as a helical span at residues 71 to 91 (LFNLAISDLLFLLTLPFWAHY). At 92-104 (AANEWVFGNIMCK) the chain is on the extracellular side. A helical transmembrane segment spans residues 105–126 (LFTGIYHIGYFGGIFFIILLTI). Over 127 to 143 (DRYLAIVHAVFAIKART) the chain is Cytoplasmic. Residues 144–168 (VNFGVITSVVTWVVAVFVSLPEIIF) form a helical membrane-spanning segment. Residues 169 to 200 (MRSQKEGSHYTCSPHFLHIQYRFWKHFQTLKM) are Extracellular-facing. Residues 201-220 (VILSLILPLLVMVICYSGIL) traverse the membrane as a helical segment. Topologically, residues 221-237 (NTLFRCRNEKKRHRAVR) are cytoplasmic. A helical transmembrane segment spans residues 238–262 (LIFAIMIVYFLFWTPYNIVLLLTTF). The Extracellular segment spans residues 263 to 279 (QEYFGLNNCSSSNRLDQ). A helical membrane pass occupies residues 280 to 303 (AMQVTETLGMTHCCLNPVIYAFVG). Topologically, residues 304-354 (EKFRNYLSVFFRKHIVKRFCKHCSIFQQVNPDRVSSVYTRSTGEQEVSTGL) are cytoplasmic. 2 S-palmitoyl cysteine lipidation sites follow: C323 and C326. S338, S339, S344, and S351 each carry phosphoserine; by BARK1.

This sequence belongs to the G-protein coupled receptor 1 family. Interacts with PRAF2. Efficient ligand binding to CCL3/MIP-1alpha and CCL4/MIP-1beta requires sulfation, O-glycosylation and sialic acid modifications. Glycosylation on Ser-6 is required for efficient binding of CCL4. Interacts with GRK2. Interacts with ARRB1 and ARRB2. Interacts with CNIH4. Interacts with S100A4; this interaction stimulates T-lymphocyte chemotaxis. In terms of processing, sulfated on at least 2 of the N-terminal tyrosines. Sulfation is required for efficient binding of the chemokines, CCL3 and CCL4. O-glycosylated, but not N-glycosylated. Ser-6 appears to be the major site. Also sialylated glycans present which contribute to chemokine binding. Ser-17 may also be glycosylated and, if so, with small moieties such as a T-antigen. Post-translationally, palmitoylation in the C-terminal is important for cell surface expression. In terms of processing, phosphorylation on serine residues in the C-terminal is stimulated by binding CC chemokines especially by APO-RANTES.

It localises to the cell membrane. Functionally, receptor for a number of inflammatory CC-chemokines including CCL3/MIP-1-alpha, CCL4/MIP-1-beta and RANTES and subsequently transduces a signal by increasing the intracellular calcium ion level. May play a role in the control of granulocytic lineage proliferation or differentiation. Participates in T-lymphocyte migration to the infection site by acting as a chemotactic receptor. The protein is C-C chemokine receptor type 5 (Ccr5) of Rattus norvegicus (Rat).